The following is an 86-amino-acid chain: Large ribosomal subunit protein bL31B (86 aa).

It belongs to the bacterial ribosomal protein bL31 family. Type B subfamily. As to quaternary structure, part of the 50S ribosomal subunit.

This chain is Large ribosomal subunit protein bL31B, found in Streptococcus agalactiae serotype Ia (strain ATCC 27591 / A909 / CDC SS700).